Here is a 696-residue protein sequence, read N- to C-terminus: Macrolide export ATP-binding/permease protein MacB (696 aa).

An ABC transporter domain is found at 6-244; it reads IELKNIERYH…KPQNKRTFID (239 aa). Residue 42 to 49 participates in ATP binding; the sequence is GASGSGKS. The interval 254-287 is disordered; the sequence is HNTEKLNRPNEKNNIDNDNKENNNGYNRNDNSFL. Basic and acidic residues predominate over residues 255–274; it reads NTEKLNRPNEKNNIDNDNKE. Low complexity predominate over residues 275-284; the sequence is NNNGYNRNDN. 4 consecutive transmembrane segments (helical) span residues 324–344, 576–596, 626–646, and 659–679; these read FLTM…IALG, IAFI…LVSV, MVSL…GGLF, and LSSF…FGYF.

Belongs to the ABC transporter superfamily. Macrolide exporter (TC 3.A.1.122) family. As to quaternary structure, homodimer. Part of the tripartite efflux system MacAB-TolC, which is composed of an inner membrane transporter, MacB, a periplasmic membrane fusion protein, MacA, and an outer membrane component, TolC. The complex forms a large protein conduit and can translocate molecules across both the inner and outer membranes. Interacts with MacA.

It is found in the cell inner membrane. Part of the tripartite efflux system MacAB-TolC. MacB is a non-canonical ABC transporter that contains transmembrane domains (TMD), which form a pore in the inner membrane, and an ATP-binding domain (NBD), which is responsible for energy generation. Confers resistance against macrolides. This chain is Macrolide export ATP-binding/permease protein MacB, found in Haemophilus ducreyi (strain 35000HP / ATCC 700724).